Here is a 156-residue protein sequence, read N- to C-terminus: 6,7-dimethyl-8-ribityllumazine synthase (156 aa).

Residues Phe-22, 57 to 59 (AVE), and 81 to 83 (SVI) each bind 5-amino-6-(D-ribitylamino)uracil. 86–87 (GT) contacts (2S)-2-hydroxy-3-oxobutyl phosphate. The active-site Proton donor is the His-89. Phe-114 provides a ligand contact to 5-amino-6-(D-ribitylamino)uracil. Residue Arg-128 participates in (2S)-2-hydroxy-3-oxobutyl phosphate binding.

This sequence belongs to the DMRL synthase family. As to quaternary structure, forms an icosahedral capsid composed of 60 subunits, arranged as a dodecamer of pentamers.

It carries out the reaction (2S)-2-hydroxy-3-oxobutyl phosphate + 5-amino-6-(D-ribitylamino)uracil = 6,7-dimethyl-8-(1-D-ribityl)lumazine + phosphate + 2 H2O + H(+). Its pathway is cofactor biosynthesis; riboflavin biosynthesis; riboflavin from 2-hydroxy-3-oxobutyl phosphate and 5-amino-6-(D-ribitylamino)uracil: step 1/2. Its function is as follows. Catalyzes the formation of 6,7-dimethyl-8-ribityllumazine by condensation of 5-amino-6-(D-ribitylamino)uracil with 3,4-dihydroxy-2-butanone 4-phosphate. This is the penultimate step in the biosynthesis of riboflavin. The polypeptide is 6,7-dimethyl-8-ribityllumazine synthase (Vibrio vulnificus (strain CMCP6)).